Consider the following 231-residue polypeptide: MSVTLALPSKGRLKEKTLAVLEKAGYKVVLPDDDRNYRARVEGEDDLDILFLSASEIARELGYGSVDLGVTGEDLARETLAHADERVAIEAQLGFGHADVVVAVPEVWRDVTTMADLDDVAADFRQRHGRRLRIATKYWRLTQQFFSQKHGIQVYRIVESLGATEGAPAAGSADMIVDITSTGSTLRANRLKVLEDGIILRSQACLVSARRSHTSRRVEEIAARIRAGLEI.

This sequence belongs to the ATP phosphoribosyltransferase family. Short subfamily. Heteromultimer composed of HisG and HisZ subunits.

It is found in the cytoplasm. It carries out the reaction 1-(5-phospho-beta-D-ribosyl)-ATP + diphosphate = 5-phospho-alpha-D-ribose 1-diphosphate + ATP. It functions in the pathway amino-acid biosynthesis; L-histidine biosynthesis; L-histidine from 5-phospho-alpha-D-ribose 1-diphosphate: step 1/9. In terms of biological role, catalyzes the condensation of ATP and 5-phosphoribose 1-diphosphate to form N'-(5'-phosphoribosyl)-ATP (PR-ATP). Has a crucial role in the pathway because the rate of histidine biosynthesis seems to be controlled primarily by regulation of HisG enzymatic activity. This is ATP phosphoribosyltransferase from Brucella suis biovar 1 (strain 1330).